A 120-amino-acid polypeptide reads, in one-letter code: Ribonuclease P protein component 2 (120 aa).

It belongs to the eukaryotic/archaeal RNase P protein component 2 family. Homodimer in solution. Component of RNase P which consists of a catalytic RNA component and at least 5 protein subunits. Forms a heterotetrameric subcomplex with Rnp3. Reconstituted enzyme missing individual protein subunits is suboptimally active, showing each subunit contributes to optimization of activity.

Its subcellular location is the cytoplasm. It catalyses the reaction Endonucleolytic cleavage of RNA, removing 5'-extranucleotides from tRNA precursor.. Its function is as follows. Part of ribonuclease P, a protein complex that generates mature tRNA molecules by cleaving their 5'-ends. The sequence is that of Ribonuclease P protein component 2 from Pyrococcus horikoshii (strain ATCC 700860 / DSM 12428 / JCM 9974 / NBRC 100139 / OT-3).